The sequence spans 156 residues: Large ribosomal subunit protein uL15 (156 aa).

Residues 1 to 44 (MKLNELRDNPGASPKRTRVGRGPGSGKGKMGGRGIKGQKSRSGV) form a disordered region. Residues 21-35 (RGPGSGKGKMGGRGI) are compositionally biased toward gly residues.

Belongs to the universal ribosomal protein uL15 family. As to quaternary structure, part of the 50S ribosomal subunit.

In terms of biological role, binds to the 23S rRNA. The protein is Large ribosomal subunit protein uL15 of Ruegeria sp. (strain TM1040) (Silicibacter sp.).